A 178-amino-acid chain; its full sequence is MSGGKYVDSEGHLYTVPIREQGNIYKPNNKAMAEEMNEKQVYDAHTKEIDLVNRDPKHLNDDVVKIDFEDVIAEPEGTHSFDGIWKASFTTFTVTKYWFYRLLSALFGIPMALIWGIYFAILSFLHIWAVVPCIKSFLIEIQCISRVYSIYVHTFCDPLFEAIGKIFSNIRINTQKEI.

At serine 2 the chain carries N-acetylserine. Serine 2 bears the Phosphoserine mark. The segment at 2 to 94 (SGGKYVDSEG…WKASFTTFTV (93 aa)) is required for homooligomerization. At 2 to 104 (SGGKYVDSEG…TKYWFYRLLS (103 aa)) the chain is on the cytoplasmic side. The residue at position 5 (lysine 5) is an N6-acetyllysine; alternate. Lysine 5 is covalently cross-linked (Glycyl lysine isopeptide (Lys-Gly) (interchain with G-Cter in ubiquitin); alternate). Tyrosine 6 is modified (phosphotyrosine). Position 9 is a phosphoserine (serine 9). A Phosphotyrosine; by ABL1 modification is found at tyrosine 14. Tyrosine 25 bears the Phosphotyrosine mark. Residues lysine 26, lysine 30, lysine 39, lysine 47, and lysine 57 each participate in a glycyl lysine isopeptide (Lys-Gly) (interchain with G-Cter in ubiquitin) cross-link. The interaction with CAVIN3 stretch occupies residues 82–94 (DGIWKASFTTFTV). The helical intramembrane region spans 105–125 (ALFGIPMALIWGIYFAILSFL). Topologically, residues 126-178 (HIWAVVPCIKSFLIEIQCISRVYSIYVHTFCDPLFEAIGKIFSNIRINTQKEI) are cytoplasmic. The interacts with SPRY1, SPRY2, SPRY3 and SPRY4 stretch occupies residues 131-142 (VPCIKSFLIEIQ). S-palmitoyl cysteine attachment occurs at residues cysteine 133, cysteine 143, and cysteine 156. Positions 149-160 (SIYVHTFCDPLF) are interacts with SPRY1, SPRY2, and SPRY4. Residues 167–178 (FSNIRINTQKEI) are interacts with SPRY1, SPRY2, SPRY3 and SPRY4.

Belongs to the caveolin family. As to quaternary structure, homooligomer. Interacts with GLIPR2. Interacts with NOSTRIN. Interacts with SNAP25 and STX1A. Interacts (via the N-terminus) with DPP4; the interaction is direct. Interacts with CTNNB1, CDH1 and JUP. Interacts with PACSIN2; this interaction induces membrane tubulation. Interacts with SLC7A9. Interacts with BMX and BTK. Interacts with TGFBR1. Interacts with CAVIN3 (via leucine-zipper domain) in a cholesterol-sensitive manner. Interacts with CAVIN1. Interacts with EHD2 in a cholesterol-dependent manner. Forms a ternary complex with UBXN6 and VCP; mediates CAV1 targeting to lysosomes for degradation. Interacts with ABCG1; this interaction regulates ABCG1-mediated cholesterol efflux. Interacts with NEU3; this interaction enhances NEU3 sialidase activity within caveola. Interacts (via C-terminus) with SPRY1, SPRY2 (via C-terminus), SPRY3, and SPRY4. Interacts with IGFBP5; this interaction allows trafficking of IGFBP5 from the plasma membrane to the nucleus. Phosphorylated at Tyr-14 by ABL1 in response to oxidative stress. In terms of processing, ubiquitinated. Undergo monoubiquitination and multi- and/or polyubiquitination. Monoubiquitination of N-terminal lysines promotes integration in a ternary complex with UBXN6 and VCP which promotes oligomeric CAV1 targeting to lysosomes for degradation. Ubiquitinated by ZNRF1; leading to degradation and modulation of the TLR4-mediated immune response.

Its subcellular location is the golgi apparatus membrane. It is found in the cell membrane. The protein localises to the membrane. It localises to the caveola. The protein resides in the membrane raft. Functionally, may act as a scaffolding protein within caveolar membranes. Forms a stable heterooligomeric complex with CAV2 that targets to lipid rafts and drives caveolae formation. Mediates the recruitment of CAVIN proteins (CAVIN1/2/3/4) to the caveolae. Interacts directly with G-protein alpha subunits and can functionally regulate their activity. Involved in the costimulatory signal essential for T-cell receptor (TCR)-mediated T-cell activation. Its binding to DPP4 induces T-cell proliferation and NF-kappa-B activation in a T-cell receptor/CD3-dependent manner. Recruits CTNNB1 to caveolar membranes and may regulate CTNNB1-mediated signaling through the Wnt pathway. Negatively regulates TGFB1-mediated activation of SMAD2/3 by mediating the internalization of TGFBR1 from membrane rafts leading to its subsequent degradation. Binds 20(S)-hydroxycholesterol (20(S)-OHC). The protein is Caveolin-1 (CAV1) of Bos taurus (Bovine).